The sequence spans 424 residues: MLPWKKHKFELLAEAPPRQASKPKGYAVSLHYSALSSLARACPEGALSRVGSMFRSKRKKLHITSEDPTYTVLYLGNATTIQARGDGCTDLAVGKIWSKSEAGRQGTKMKLTVSAQGIRMVHAEERALRRPGHLYLLHRVTYCVADARLPKVFAWVYRHELKHKAVMLRCHAVLVSKPEKAQAMALLLYQTSANALAEFKRLKRRDDARHQQQELVGAHTIPLVPLRKLLLHGPCCYKPPVERSRSAPKLGSITEDLLGEQQEEELQEEEEEHLEDCLEEEEEEDGVGDGDPAEEEAEAQRALVVAMQLECEDLLDPLENGHEEALGDGGVSLGPSSGTSLPLSVCASDMKAQLSQLISDLGDLSFGNDVSTLETDLRVTRLLSGESTGSESSIEGGGLDATPVSPGNPSGPADSTSLDEPYSG.

Positions 261–297 are enriched in acidic residues; that stretch reads QQEEELQEEEEEHLEDCLEEEEEEDGVGDGDPAEEEA. Disordered stretches follow at residues 261 to 299 and 382 to 424; these read QQEEELQEEEEEHLEDCLEEEEEEDGVGDGDPAEEEAEA and LLSG…PYSG. Positions 382 to 394 are enriched in low complexity; that stretch reads LLSGESTGSESSI. Polar residues predominate over residues 405 to 418; that stretch reads SPGNPSGPADSTSL.

This sequence belongs to the FAM43 family.

The protein is Protein FAM43A (Fam43a) of Mus musculus (Mouse).